We begin with the raw amino-acid sequence, 179 residues long: Ferric nitrobindin-like protein (179 aa).

The GXWXGXG motif lies at 17 to 23 (GRWEGLG).

The protein belongs to the nitrobindin family.

This Thermobifida fusca (strain YX) protein is Ferric nitrobindin-like protein.